A 307-amino-acid polypeptide reads, in one-letter code: Small ribosomal subunit protein uS3 (307 aa).

The KH type-2 domain maps to Met-17 to Lys-86. The segment covering Ile-201–Lys-226 has biased composition (basic and acidic residues). Residues Ile-201–Glu-265 form a disordered region. The segment covering Pro-240–Glu-265 has biased composition (acidic residues).

This sequence belongs to the universal ribosomal protein uS3 family. In terms of assembly, part of the 30S ribosomal subunit.

Functionally, binds the lower part of the 30S subunit head. In Methanosarcina mazei (strain ATCC BAA-159 / DSM 3647 / Goe1 / Go1 / JCM 11833 / OCM 88) (Methanosarcina frisia), this protein is Small ribosomal subunit protein uS3.